A 291-amino-acid polypeptide reads, in one-letter code: Elongation factor Ts (291 aa).

Residues 80-83 (TDFV) form an involved in Mg(2+) ion dislocation from EF-Tu region.

It belongs to the EF-Ts family.

It is found in the cytoplasm. Its function is as follows. Associates with the EF-Tu.GDP complex and induces the exchange of GDP to GTP. It remains bound to the aminoacyl-tRNA.EF-Tu.GTP complex up to the GTP hydrolysis stage on the ribosome. The protein is Elongation factor Ts of Acinetobacter baumannii (strain AB307-0294).